A 1091-amino-acid polypeptide reads, in one-letter code: Voltage-dependent calcium channel subunit alpha-2/delta-1 (1091 aa).

The N-terminal stretch at 1–24 is a signal peptide; sequence MAAGCLLALTLTLFQSWLIGPSSE. Topologically, residues 25 to 1061 are extracellular; that stretch reads EPFPSPVTIK…VLEDYTDCGG (1037 aa). N-linked (GlcNAc...) asparagine glycosylation occurs at Asn-92. Ser-119 carries the post-translational modification Phosphoserine. 2 N-linked (GlcNAc...) asparagine glycosylation sites follow: Asn-136 and Asn-184. The VWFA domain maps to 252 to 429; the sequence is DMLILVDVSG…INTQEYLDVL (178 aa). Asp-258, Ser-260, and Ser-262 together coordinate a divalent metal cation. The short motif at 258–262 is the MIDAS-like motif element; that stretch reads DVSGS. N-linked (GlcNAc...) asparagine glycans are attached at residues Asn-323 and Asn-347. Cysteines 403 and 1047 form a disulfide. Residues 445-536 form the Cache domain; that stretch reads WTNVYLDALE…QPKNPKSQEP (92 aa). N-linked (GlcNAc...) asparagine glycans are attached at residues Asn-593, Asn-769, Asn-876, and Asn-973. Residues 1062-1082 form a helical membrane-spanning segment; that stretch reads VSGLNPSLWSIFGLQFILLWL. At 1083–1091 the chain is on the cytoplasmic side; the sequence is VSGSRHYLW.

Belongs to the calcium channel subunit alpha-2/delta family. Dimer formed of alpha-2-1 and delta-1 chains; disulfide-linked. Voltage-dependent calcium channels are multisubunit complexes, consisting of alpha-1 (CACNA1), alpha-2 (CACNA2D), beta (CACNB) and delta (CACNA2D) subunits in a 1:1:1:1 ratio. Post-translationally, proteolytically processed into subunits alpha-2-1 and delta-1 that are disulfide-linked.

It localises to the membrane. It is found in the cell membrane. Its function is as follows. The alpha-2/delta subunit of voltage-dependent calcium channels regulates calcium current density and activation/inactivation kinetics of the calcium channel. Plays an important role in excitation-contraction coupling. In Rattus norvegicus (Rat), this protein is Voltage-dependent calcium channel subunit alpha-2/delta-1 (Cacna2d1).